The following is a 358-amino-acid chain: MIEQQKRKGPELPLVPVKRQRHELLLGAAGSGPGAGQQQAAPGALLQAGPPRCSSLQAPIMLLSGHEGEVYCCKFHPNGSTLASAGFDRLILLWNVYGDCDNYATLKGHSGAVMELHYNTDGSMLFSASTDKTVAVWDSETGERVKRLKGHTSFVNSCYPARRGPQLVCTGSDDGTVKLWDIRKKAAIQTFQNTYQVLAVTFNDTSDQIISGGIDNDIKVWDLRQNKLTYTMRGHADSVTGLSLSSEGSYLLSNAMDNTVRVWDVRPFAPKERCVRIFQGNVHNFEKNLLRCSWSPDGSKIAAGSADRFVYVWDTTSRRILYKLPGHAGSINEVAFHPDEPIILSASSDKRLYMGEIQ.

K18 is covalently cross-linked (Glycyl lysine isopeptide (Lys-Gly) (interchain with G-Cter in SUMO2)). Position 21 is an asymmetric dimethylarginine (R21). WD repeat units lie at residues 65–104, 108–147, 150–190, 192–231, 234–273, 284–323, and 326–358; these read GHEGEVYCCKFHPNGSTLASAGFDRLILLWNVYGDCDNYA, GHSGAVMELHYNTDGSMLFSASTDKTVAVWDSETGERVKR, GHTS…AIQT, QNTYQVLAVTFNDTSDQIISGGIDNDIKVWDLRQNKLTYT, GHADSVTGLSLSSEGSYLLSNAMDNTVRVWDVRPFAPKER, NFEKNLLRCSWSPDGSKIAAGSADRFVYVWDTTSRRILYK, and GHAGSINEVAFHPDEPIILSASSDKRLYMGEIQ. A Glycyl lysine isopeptide (Lys-Gly) (interchain with G-Cter in SUMO2) cross-link involves residue K271.

As to quaternary structure, component of the pre-catalytic and catalytic spliceosome complexes. Component of the postcatalytic spliceosome P complex. Part of the U5 snRNP complex. Interacts with PRPF8. Component of the U4/U6-U5 tri-snRNP complex composed of the U4, U6 and U5 snRNAs and at least PRPF3, PRPF4, PRPF6, PRPF8, PRPF31, SNRNP200, TXNL4A, WDR57, SNRNP40, DDX23, CD2BP2, PPIH, SNU13, EFTUD2, SART1 and USP39. Component of the minor spliceosome, which splices U12-type introns.

It localises to the nucleus. Required for pre-mRNA splicing as component of the activated spliceosome. Component of the U5 small nuclear ribonucleoprotein (snRNP) complex and the U4/U6-U5 tri-snRNP complex, building blocks of the spliceosome. As a component of the minor spliceosome, involved in the splicing of U12-type introns in pre-mRNAs. This Bos taurus (Bovine) protein is U5 small nuclear ribonucleoprotein 40 kDa protein (SNRNP40).